We begin with the raw amino-acid sequence, 395 residues long: Glutamate N-acetyltransferase (395 aa).

Positions 146, 169, 180, 263, 390, and 395 each coordinate substrate. Threonine 180 serves as the catalytic Nucleophile.

Belongs to the ArgJ family. In terms of assembly, heterotetramer of two alpha and two beta chains.

The protein resides in the cytoplasm. The enzyme catalyses N(2)-acetyl-L-ornithine + L-glutamate = N-acetyl-L-glutamate + L-ornithine. The protein operates within amino-acid biosynthesis; L-arginine biosynthesis; L-ornithine and N-acetyl-L-glutamate from L-glutamate and N(2)-acetyl-L-ornithine (cyclic): step 1/1. Functionally, catalyzes the transfer of the acetyl group from N(2)-acetylornithine to glutamate, forming N-acetylglutamate and L-ornithine. This Methanosarcina acetivorans (strain ATCC 35395 / DSM 2834 / JCM 12185 / C2A) protein is Glutamate N-acetyltransferase.